Here is a 173-residue protein sequence, read N- to C-terminus: Oleosin 18.5 kDa (173 aa).

The segment at 1 to 45 (MADTARGTHHDIIGRDQYPMMGRDRDQYQMSGRGSDYSKSRQIAK) is polar. Residues 46-117 (AATAVTAGGS…AAITVFSWIY (72 aa)) are hydrophobic. Helical transmembrane passes span 54–74 (GSLLVLSSLTLVGTVIALTVA), 76–96 (PLLVIFSPILVPALITVALLI), and 97–117 (TGFLSSGGFGIAAITVFSWIY). The segment at 151-173 (YYGQQHTGGEHDRDRTRGGQHTT) is disordered. Positions 158-167 (GGEHDRDRTR) are enriched in basic and acidic residues.

It belongs to the oleosin family.

The protein resides in the lipid droplet. It is found in the membrane. May have a structural role to stabilize the lipid body during desiccation of the seed by preventing coalescence of the oil. Probably interacts with both lipid and phospholipid moieties of lipid bodies. May also provide recognition signals for specific lipase anchorage in lipolysis during seedling growth. The polypeptide is Oleosin 18.5 kDa (Arabidopsis thaliana (Mouse-ear cress)).